A 117-amino-acid chain; its full sequence is Large ribosomal subunit protein bL31B (117 aa).

A disordered region spans residues 75-117; the sequence is KRFERKKEASPADTPPESDSTTENASVEKKAEKKRVTAKGSKK. Over residues 100 to 109 the composition is skewed to basic and acidic residues; that stretch reads SVEKKAEKKR.

The protein belongs to the bacterial ribosomal protein bL31 family. Type B subfamily. As to quaternary structure, part of the 50S ribosomal subunit.

The chain is Large ribosomal subunit protein bL31B from Protochlamydia amoebophila (strain UWE25).